Here is a 120-residue protein sequence, read N- to C-terminus: Large ribosomal subunit protein uL18 (120 aa).

This sequence belongs to the universal ribosomal protein uL18 family. In terms of assembly, part of the 50S ribosomal subunit; part of the 5S rRNA/L5/L18/L25 subcomplex. Contacts the 5S and 23S rRNAs.

This is one of the proteins that bind and probably mediate the attachment of the 5S RNA into the large ribosomal subunit, where it forms part of the central protuberance. The protein is Large ribosomal subunit protein uL18 of Afipia carboxidovorans (strain ATCC 49405 / DSM 1227 / KCTC 32145 / OM5) (Oligotropha carboxidovorans).